The chain runs to 274 residues: Deoxyribonuclease TATDN3 (274 aa).

Zn(2+) contacts are provided by H12, H14, E107, H147, H170, and D218.

Belongs to the metallo-dependent hydrolases superfamily. TatD-type hydrolase family. The cofactor is Mn(2+). Ca(2+) serves as cofactor. It depends on Mg(2+) as a cofactor. Requires Zn(2+) as cofactor.

It localises to the nucleus. The 3'-exonuclease activity is sensitive to the metal ion present in the active site, whereas the AP endodeoxyribonuclease activity is observed in a variety of divalent metal cofactors. 3'-exoxonuclease activity is suppressed in the presence of Ca(2+), Zn(2+) and Ni(2+). Exhibits 3'-exonuclease activities and apurinic/apyrimidinic (AP) endonuclease (in vitro). Show preferential AP endonuclease activity on double-stranded DNA substrates and 3'- exonuclease activity on single-stranded DNA. The sequence is that of Deoxyribonuclease TATDN3 (TATDN3) from Homo sapiens (Human).